A 1212-amino-acid chain; its full sequence is uncharacterized protein (1212 aa).

A compositionally biased stretch (polar residues) spans 1 to 31; it reads MASIQTKLVSQPQTQQPLQNGFFNNYQQNIY. Disordered regions lie at residues 1 to 70, 119 to 169, 211 to 231, 248 to 374, 655 to 681, 935 to 957, and 973 to 1125; these read MASI…HLQQ, PQAQ…FGTN, SLNNSLNSSGNNSTLNTSNNN, INIG…NNNK, QQQPQQLNQNPPNQQLPQQPNQITQQQ, NQNQNNNNNNNNNNNNNINCNNA, and QLQP…QQLQ. Composition is skewed to low complexity over residues 48 to 70 and 119 to 163; these read PQQQPILPQQPQPQSQQPLHLQQ and PQAQ…NNNN. Positions 256-275 are enriched in low complexity; sequence NNSNTNNVNNINTNNTNNNN. Composition is skewed to polar residues over residues 276–285 and 292–317; these read KSGSIDQFGS and YVNSSSNSAIPTPPTNQTNGSNSHSP. Over residues 322-340 the composition is skewed to low complexity; sequence INSNININSNLQSPQNIQQ. Over residues 341–351 the composition is skewed to polar residues; the sequence is TILSPNISPNH. Residues 352 to 373 show a composition bias toward low complexity; the sequence is NNNNNNNNNNNNNNNNNNNNNN. Composition is skewed to low complexity over residues 998 to 1022 and 1037 to 1125; these read NSVNNNINNNFINNNSFVNNNNNNN and QNNN…QQLQ.

This is an uncharacterized protein from Dictyostelium discoideum (Social amoeba).